We begin with the raw amino-acid sequence, 297 residues long: uncharacterized protein (297 aa).

Residue E46 is part of the active site.

It belongs to the PhzF family. Homodimer and homotetramer.

This is an uncharacterized protein from Salmonella typhimurium (strain LT2 / SGSC1412 / ATCC 700720).